A 380-amino-acid chain; its full sequence is Glucose-1-phosphate adenylyltransferase (380 aa).

Residues glycine 164, 179–180 (EK), and serine 190 contribute to the alpha-D-glucose 1-phosphate site.

This sequence belongs to the bacterial/plant glucose-1-phosphate adenylyltransferase family. In terms of assembly, homotetramer.

The enzyme catalyses alpha-D-glucose 1-phosphate + ATP + H(+) = ADP-alpha-D-glucose + diphosphate. Its pathway is glycan biosynthesis; glycogen biosynthesis. In terms of biological role, involved in the biosynthesis of ADP-glucose, a building block required for the elongation reactions to produce glycogen. Catalyzes the reaction between ATP and alpha-D-glucose 1-phosphate (G1P) to produce pyrophosphate and ADP-Glc. The polypeptide is Glucose-1-phosphate adenylyltransferase (Ligilactobacillus salivarius (strain UCC118) (Lactobacillus salivarius)).